We begin with the raw amino-acid sequence, 119 residues long: Holo-[acyl-carrier-protein] synthase (119 aa).

Mg(2+) is bound by residues Asp8 and Glu58.

This sequence belongs to the P-Pant transferase superfamily. AcpS family. Mg(2+) serves as cofactor.

It localises to the cytoplasm. The catalysed reaction is apo-[ACP] + CoA = holo-[ACP] + adenosine 3',5'-bisphosphate + H(+). Functionally, transfers the 4'-phosphopantetheine moiety from coenzyme A to a Ser of acyl-carrier-protein. This is Holo-[acyl-carrier-protein] synthase from Bacillus thuringiensis subsp. konkukian (strain 97-27).